The primary structure comprises 396 residues: S-adenosylmethionine synthase (396 aa).

His-15 serves as a coordination point for ATP. Asp-17 is a binding site for Mg(2+). A K(+)-binding site is contributed by Glu-43. L-methionine contacts are provided by Glu-56 and Gln-99. Residues 99–109 form a flexible loop region; the sequence is QSGDIAQGVDT. Residues 173-175, 241-242, Asp-250, 256-257, Ala-273, and Lys-277 contribute to the ATP site; these read DGK, RF, and RK. Position 250 (Asp-250) interacts with L-methionine. Lys-281 is an L-methionine binding site.

It belongs to the AdoMet synthase family. As to quaternary structure, homotetramer; dimer of dimers. Mg(2+) is required as a cofactor. K(+) serves as cofactor.

It localises to the cytoplasm. The catalysed reaction is L-methionine + ATP + H2O = S-adenosyl-L-methionine + phosphate + diphosphate. The protein operates within amino-acid biosynthesis; S-adenosyl-L-methionine biosynthesis; S-adenosyl-L-methionine from L-methionine: step 1/1. Functionally, catalyzes the formation of S-adenosylmethionine (AdoMet) from methionine and ATP. The overall synthetic reaction is composed of two sequential steps, AdoMet formation and the subsequent tripolyphosphate hydrolysis which occurs prior to release of AdoMet from the enzyme. The chain is S-adenosylmethionine synthase from Nocardioides sp. (strain ATCC BAA-499 / JS614).